Here is a 189-residue protein sequence, read N- to C-terminus: Small ribosomal subunit protein uS5 (189 aa).

The 64-residue stretch at 22-85 folds into the S5 DRBM domain; sequence FVDKLVAINR…EAAKRDLIFV (64 aa).

This sequence belongs to the universal ribosomal protein uS5 family. Part of the 30S ribosomal subunit. Contacts proteins S4 and S8.

Its function is as follows. With S4 and S12 plays an important role in translational accuracy. Located at the back of the 30S subunit body where it stabilizes the conformation of the head with respect to the body. The chain is Small ribosomal subunit protein uS5 from Sinorhizobium fredii (strain NBRC 101917 / NGR234).